The following is a 330-amino-acid chain: Methionyl-tRNA formyltransferase (330 aa).

117–120 (SLLP) provides a ligand contact to (6S)-5,6,7,8-tetrahydrofolate.

The protein belongs to the Fmt family.

The enzyme catalyses L-methionyl-tRNA(fMet) + (6R)-10-formyltetrahydrofolate = N-formyl-L-methionyl-tRNA(fMet) + (6S)-5,6,7,8-tetrahydrofolate + H(+). In terms of biological role, attaches a formyl group to the free amino group of methionyl-tRNA(fMet). The formyl group appears to play a dual role in the initiator identity of N-formylmethionyl-tRNA by promoting its recognition by IF2 and preventing the misappropriation of this tRNA by the elongation apparatus. In Verminephrobacter eiseniae (strain EF01-2), this protein is Methionyl-tRNA formyltransferase.